The sequence spans 310 residues: Thioredoxin reductase (310 aa).

34 to 41 (NGMQPGGQ) is a binding site for FAD. Cys-135 and Cys-138 are disulfide-bonded. 281–290 (DVQDKIYRQA) contacts FAD.

The protein belongs to the class-II pyridine nucleotide-disulfide oxidoreductase family. In terms of assembly, homodimer. Requires FAD as cofactor.

It is found in the cytoplasm. It catalyses the reaction [thioredoxin]-dithiol + NADP(+) = [thioredoxin]-disulfide + NADPH + H(+). This is Thioredoxin reductase (trxB) from Rickettsia conorii (strain ATCC VR-613 / Malish 7).